A 221-amino-acid polypeptide reads, in one-letter code: Chalcone--flavanone isomerase 2 (221 aa).

Thr-50, Asn-115, and Ser-192 together coordinate substrate.

The protein belongs to the chalcone isomerase family.

The catalysed reaction is a chalcone = a flavanone.. It participates in secondary metabolite biosynthesis; flavonoid biosynthesis. Functionally, catalyzes the intramolecular cyclization of bicyclic chalcones into tricyclic (S)-flavanones. Responsible for the isomerization of 4,2',4',6'-tetrahydroxychalcone (also termed chalcone) into naringenin. The sequence is that of Chalcone--flavanone isomerase 2 (CHI2) from Lotus japonicus (Lotus corniculatus var. japonicus).